Reading from the N-terminus, the 691-residue chain is Protein 4.2 (691 aa).

Residue Gly-2 is the site of N-myristoyl glycine attachment. The band 3 binding stretch occupies residues 31–39; it reads LTLRRGQSF. Ser-248 is modified (phosphoserine). Residue Tyr-570 is modified to Phosphotyrosine.

This sequence belongs to the transglutaminase superfamily. Transglutaminase family. In terms of assembly, component of the ankyrin-1 complex in the erythrocyte, composed of ANK1, RHCE, RHAG, SLC4A1, EPB42, GYPA, GYPB and AQP1. Interacts with SLC4A1 (via the cytoplasmic domain); this interaction is mediated by the SLC4A1 Band 3-I dimer. Interacts with ANK1 (via ANK 1-13 repeats). Interacts with AQP1 (via the C-terminal).

It is found in the cell membrane. The protein resides in the cytoplasm. It localises to the cytoskeleton. Its function is as follows. Component of the ankyrin-1 complex, a multiprotein complex involved in the stability and shape of the erythrocyte membrane. The chain is Protein 4.2 from Mus musculus (Mouse).